Here is a 181-residue protein sequence, read N- to C-terminus: Interleukin-10 (181 aa).

The N-terminal stretch at 1–19 (MHGSALLCCCLVLLAGVGA) is a signal peptide. Intrachain disulfides connect Cys31/Cys129 and Cys81/Cys135. Asn137 carries an N-linked (GlcNAc...) asparagine glycan.

This sequence belongs to the IL-10 family. In terms of assembly, homodimer. Interacts with IL10RA and IL10RB.

It localises to the secreted. Functionally, major immune regulatory cytokine that acts on many cells of the immune system where it has profound anti-inflammatory functions, limiting excessive tissue disruption caused by inflammation. Mechanistically, IL10 binds to its heterotetrameric receptor comprising IL10RA and IL10RB leading to JAK1 and STAT2-mediated phosphorylation of STAT3. In turn, STAT3 translocates to the nucleus where it drives expression of anti-inflammatory mediators. Targets antigen-presenting cells (APCs) such as macrophages and monocytes and inhibits their release of pro-inflammatory cytokines including granulocyte-macrophage colony-stimulating factor /GM-CSF, granulocyte colony-stimulating factor/G-CSF, IL-1 alpha, IL-1 beta, IL-6, IL-8 and TNF-alpha. Also interferes with antigen presentation by reducing the expression of MHC-class II and co-stimulatory molecules, thereby inhibiting their ability to induce T cell activation. In addition, controls the inflammatory response of macrophages by reprogramming essential metabolic pathways including mTOR signaling. This chain is Interleukin-10 (IL10), found in Canis lupus familiaris (Dog).